A 196-amino-acid polypeptide reads, in one-letter code: Imidazole glycerol phosphate synthase subunit HisH (196 aa).

One can recognise a Glutamine amidotransferase type-1 domain in the interval 2–196; the sequence is NVVILDTGCA…AKLLKNFLEM (195 aa). Cys-77 functions as the Nucleophile in the catalytic mechanism. Active-site residues include His-178 and Glu-180.

In terms of assembly, heterodimer of HisH and HisF.

It is found in the cytoplasm. It catalyses the reaction 5-[(5-phospho-1-deoxy-D-ribulos-1-ylimino)methylamino]-1-(5-phospho-beta-D-ribosyl)imidazole-4-carboxamide + L-glutamine = D-erythro-1-(imidazol-4-yl)glycerol 3-phosphate + 5-amino-1-(5-phospho-beta-D-ribosyl)imidazole-4-carboxamide + L-glutamate + H(+). The enzyme catalyses L-glutamine + H2O = L-glutamate + NH4(+). It functions in the pathway amino-acid biosynthesis; L-histidine biosynthesis; L-histidine from 5-phospho-alpha-D-ribose 1-diphosphate: step 5/9. Functionally, IGPS catalyzes the conversion of PRFAR and glutamine to IGP, AICAR and glutamate. The HisH subunit catalyzes the hydrolysis of glutamine to glutamate and ammonia as part of the synthesis of IGP and AICAR. The resulting ammonia molecule is channeled to the active site of HisF. The chain is Imidazole glycerol phosphate synthase subunit HisH from Shigella dysenteriae serotype 1 (strain Sd197).